A 478-amino-acid chain; its full sequence is Lysosome membrane protein 2 (478 aa).

The Cytoplasmic portion of the chain corresponds to 2–4; sequence ARC. A helical membrane pass occupies residues 5 to 27; sequence CFYTAGTLSLLLLVTSVTLLVAR. Topologically, residues 28-433 are lumenal; that stretch reads VFQKAVDQTI…QLKSVINTTL (406 aa). 4 N-linked (GlcNAc...) asparagine glycosylation sites follow: N45, N68, N105, and N122. The important for interaction with GBA1 stretch occupies residues 155–191; that stretch reads IIEAMLKAYQQTLFVTHTVHELLWGYKDEVLSLVHIF. Residues N206, N224, N249, and N304 are each glycosylated (N-linked (GlcNAc...) asparagine). Intrachain disulfides connect C274–C329 and C312–C318. N325, N412, and N430 each carry an N-linked (GlcNAc...) asparagine glycan. The chain crosses the membrane as a helical span at residues 434–459; sequence IVTNIPYIIMALGVFFGLIFTWLACR. Topologically, residues 460–478 are cytoplasmic; that stretch reads GQGSTDEGTADERAPLIRT.

It belongs to the CD36 family. In terms of assembly, interacts with GBA1. In terms of processing, acylated by palmitic acid group(s).

The protein localises to the lysosome membrane. In terms of biological role, acts as a lysosomal receptor for glucosylceramidase (GBA1) targeting. In Rattus norvegicus (Rat), this protein is Lysosome membrane protein 2 (Scarb2).